The primary structure comprises 257 residues: Acetylglutamate kinase (257 aa).

Residues 43-44 (GG), Arg-65, and Asn-157 contribute to the substrate site. ATP-binding positions include 180–185 (DVSGIL) and 208–210 (IIT).

This sequence belongs to the acetylglutamate kinase family. ArgB subfamily. Homodimer.

The protein localises to the cytoplasm. It carries out the reaction N-acetyl-L-glutamate + ATP = N-acetyl-L-glutamyl 5-phosphate + ADP. Its pathway is amino-acid biosynthesis; L-arginine biosynthesis; N(2)-acetyl-L-ornithine from L-glutamate: step 2/4. Functionally, catalyzes the ATP-dependent phosphorylation of N-acetyl-L-glutamate. The chain is Acetylglutamate kinase from Photorhabdus laumondii subsp. laumondii (strain DSM 15139 / CIP 105565 / TT01) (Photorhabdus luminescens subsp. laumondii).